Reading from the N-terminus, the 329-residue chain is Protein STRICTOSIDINE SYNTHASE-LIKE 11 (329 aa).

The N-terminal stretch at 1–23 is a signal peptide; that stretch reads MMRSFVSLISLLLLLSFSSSVLS. 2 N-linked (GlcNAc...) asparagine glycosylation sites follow: Asn37 and Asn79.

The protein belongs to the strictosidine synthase family.

It is found in the vacuole. The catalysed reaction is 3alpha(S)-strictosidine + H2O = secologanin + tryptamine. Its pathway is alkaloid biosynthesis; 3alpha(S)-strictosidine biosynthesis; 3alpha(S)-strictosidine from secologanin and tryptamine: step 1/1. Catalyzes the stereospecific condensation of tryptamine with secologanin to form strictosidine, the key intermediate of indole alkaloid biosynthesis. This chain is Protein STRICTOSIDINE SYNTHASE-LIKE 11, found in Arabidopsis thaliana (Mouse-ear cress).